The following is a 492-amino-acid chain: Glutamyl-tRNA(Gln) amidotransferase subunit A (492 aa).

Catalysis depends on charge relay system residues Lys-79 and Ser-154. Ser-178 functions as the Acyl-ester intermediate in the catalytic mechanism.

It belongs to the amidase family. GatA subfamily. In terms of assembly, heterotrimer of A, B and C subunits.

It carries out the reaction L-glutamyl-tRNA(Gln) + L-glutamine + ATP + H2O = L-glutaminyl-tRNA(Gln) + L-glutamate + ADP + phosphate + H(+). In terms of biological role, allows the formation of correctly charged Gln-tRNA(Gln) through the transamidation of misacylated Glu-tRNA(Gln) in organisms which lack glutaminyl-tRNA synthetase. The reaction takes place in the presence of glutamine and ATP through an activated gamma-phospho-Glu-tRNA(Gln). This Acinetobacter baumannii (strain AB0057) protein is Glutamyl-tRNA(Gln) amidotransferase subunit A.